The primary structure comprises 801 residues: Phenylalanine--tRNA ligase beta subunit (801 aa).

Positions 39–153 (AEGLSKLVVG…DEAVPGDAIF (115 aa)) constitute a tRNA-binding domain. In terms of domain architecture, B5 spans 406–481 (TEPVEVSTNL…RIYGYDKLPT (76 aa)). The Mg(2+) site is built by Asp459, Asp465, Glu468, and Glu469. Residues 708–801 (TKFPAMTRDI…LTEQVGAEVR (94 aa)) form the FDX-ACB domain.

Belongs to the phenylalanyl-tRNA synthetase beta subunit family. Type 1 subfamily. Tetramer of two alpha and two beta subunits. Requires Mg(2+) as cofactor.

The protein resides in the cytoplasm. It catalyses the reaction tRNA(Phe) + L-phenylalanine + ATP = L-phenylalanyl-tRNA(Phe) + AMP + diphosphate + H(+). This is Phenylalanine--tRNA ligase beta subunit from Streptococcus pyogenes serotype M3 (strain SSI-1).